The primary structure comprises 466 residues: Phosphomethylpyrimidine synthase (466 aa).

Substrate-binding positions include asparagine 80, methionine 109, tyrosine 139, histidine 175, 195–197 (SRG), 236–239 (DSLR), and glutamate 275. Histidine 279 contacts Zn(2+). Tyrosine 302 serves as a coordination point for substrate. Histidine 343 is a binding site for Zn(2+). [4Fe-4S] cluster contacts are provided by cysteine 423, cysteine 426, and cysteine 431.

Belongs to the ThiC family. [4Fe-4S] cluster is required as a cofactor.

It catalyses the reaction 5-amino-1-(5-phospho-beta-D-ribosyl)imidazole + S-adenosyl-L-methionine = 4-amino-2-methyl-5-(phosphooxymethyl)pyrimidine + CO + 5'-deoxyadenosine + formate + L-methionine + 3 H(+). Its pathway is cofactor biosynthesis; thiamine diphosphate biosynthesis. Functionally, catalyzes the synthesis of the hydroxymethylpyrimidine phosphate (HMP-P) moiety of thiamine from aminoimidazole ribotide (AIR) in a radical S-adenosyl-L-methionine (SAM)-dependent reaction. The sequence is that of Phosphomethylpyrimidine synthase from Prochlorococcus marinus (strain NATL1A).